A 58-amino-acid polypeptide reads, in one-letter code: Basic phospholipase A2 homolog PocTX (58 aa).

C29 and C45 are disulfide-bonded.

In terms of tissue distribution, expressed by the venom gland.

The protein localises to the secreted. Wasp venom phospholipase A2 homolog that lacks enzymatic activity. The sequence is that of Basic phospholipase A2 homolog PocTX from Polybia occidentalis (Paper wasp).